The sequence spans 594 residues: UvrABC system protein C (594 aa).

The GIY-YIG domain occupies 14–91 (DQPGCYLMKD…IKKYDPKYNI (78 aa)). The region spanning 196–231 (KEIRSELETKMYEASEKLEFERAKELRDQIAHIDAI) is the UVR domain.

Belongs to the UvrC family. In terms of assembly, interacts with UvrB in an incision complex.

Its subcellular location is the cytoplasm. In terms of biological role, the UvrABC repair system catalyzes the recognition and processing of DNA lesions. UvrC both incises the 5' and 3' sides of the lesion. The N-terminal half is responsible for the 3' incision and the C-terminal half is responsible for the 5' incision. The polypeptide is UvrABC system protein C (Bacillus mycoides (strain KBAB4) (Bacillus weihenstephanensis)).